The primary structure comprises 106 residues: Ig kappa-b4 chain C region (106 aa).

One can recognise an Ig-like domain in the interval 6–99; it reads PSVLLFPPSK…VQGSASPIVQ (94 aa). Cys-27 and Cys-87 form a disulfide bridge. Residues 48 to 64 show a composition bias toward polar residues; the sequence is QQSGIENSKTPQSPEDN. Positions 48–67 are disordered; it reads QQSGIENSKTPQSPEDNTYS.

The protein is Ig kappa-b4 chain C region (K-BAS) of Oryctolagus cuniculus (Rabbit).